The sequence spans 493 residues: Transcript termination protein A18 (493 aa).

In terms of domain architecture, Helicase ATP-binding spans 100–256 (MIELKRPLYI…NSIINIAKLS (157 aa)). 113–120 (LACGFGKT) is a binding site for ATP. Residues 206 to 209 (DESH) carry the DESH box motif.

This sequence belongs to the helicase family. Poxviruses subfamily. As to quaternary structure, interacts with G2. Might be part of a transcription complex composed at least of G2, A18, and H5.

It is found in the virion. DNA helicase which seems to act as a postreplicative transcription termination factor. Involved in ATP-dependent release of nascent RNA. Forms a stable complex with single-stranded DNA, and to a lesser extent RNA. The protein is Transcript termination protein A18 of Camelus.